Consider the following 85-residue polypeptide: Small ribosomal subunit protein uS15 (85 aa).

Belongs to the universal ribosomal protein uS15 family. In terms of assembly, part of the 30S ribosomal subunit. Forms a bridge to the 50S subunit in the 70S ribosome, contacting the 23S rRNA.

Its function is as follows. One of the primary rRNA binding proteins, it binds directly to 16S rRNA where it helps nucleate assembly of the platform of the 30S subunit by binding and bridging several RNA helices of the 16S rRNA. In terms of biological role, forms an intersubunit bridge (bridge B4) with the 23S rRNA of the 50S subunit in the ribosome. The protein is Small ribosomal subunit protein uS15 of Fusobacterium nucleatum subsp. nucleatum (strain ATCC 25586 / DSM 15643 / BCRC 10681 / CIP 101130 / JCM 8532 / KCTC 2640 / LMG 13131 / VPI 4355).